Consider the following 427-residue polypeptide: Cryptic catabolic NAD-specific glutamate dehydrogenase GudB (427 aa).

Substrate contacts are provided by lysine 80 and lysine 107. Lysine 119 acts as the Proton donor in catalysis. Residues threonine 203 and asparagine 234 each coordinate NAD(+). Residue serine 361 coordinates substrate.

It belongs to the Glu/Leu/Phe/Val dehydrogenases family. As to quaternary structure, homohexamer.

The enzyme catalyses L-glutamate + NAD(+) + H2O = 2-oxoglutarate + NH4(+) + NADH + H(+). Its function is as follows. GudB seems to be intrinsically inactive, however spontaneous mutations removing a 9-bp direct repeat within the wild-type gudB sequence activated the GudB protein and allowed more-efficient utilization of amino acids of the glutamate family (called gutB1). This 3 amino acid insertion presumably causes severe destabilization of the fold of the protein, leading to an inactive enzyme that is very quickly degraded. The cryptic GudB serves as a buffer that may compensate for mutations in the rocG gene and that can also be decryptified for the utilization of glutamate as a single carbon source in the absence of arginine. It is unable to synthesize glutamate. This is Cryptic catabolic NAD-specific glutamate dehydrogenase GudB from Bacillus subtilis (strain 168).